Here is a 383-residue protein sequence, read N- to C-terminus: uncharacterized protein (383 aa).

This sequence belongs to the peptidase M20 family.

This is an uncharacterized protein from Staphylococcus epidermidis (strain ATCC 12228 / FDA PCI 1200).